We begin with the raw amino-acid sequence, 629 residues long: tRNA uridine 5-carboxymethylaminomethyl modification enzyme MnmG (629 aa).

Position 4–9 (4–9) interacts with FAD; that stretch reads GGGHAG. 268–282 contributes to the NAD(+) binding site; it reads GPRYCPSIEDKVNRF.

This sequence belongs to the MnmG family. As to quaternary structure, homodimer. Heterotetramer of two MnmE and two MnmG subunits. It depends on FAD as a cofactor.

It localises to the cytoplasm. Functionally, NAD-binding protein involved in the addition of a carboxymethylaminomethyl (cmnm) group at the wobble position (U34) of certain tRNAs, forming tRNA-cmnm(5)s(2)U34. This is tRNA uridine 5-carboxymethylaminomethyl modification enzyme MnmG from Helicobacter hepaticus (strain ATCC 51449 / 3B1).